A 182-amino-acid polypeptide reads, in one-letter code: Probable RNA 2'-phosphotransferase (182 aa).

Belongs to the KptA/TPT1 family.

Functionally, removes the 2'-phosphate from RNA via an intermediate in which the phosphate is ADP-ribosylated by NAD followed by a presumed transesterification to release the RNA and generate ADP-ribose 1''-2''-cyclic phosphate (APPR&gt;P). May function as an ADP-ribosylase. In Pseudomonas fluorescens (strain ATCC BAA-477 / NRRL B-23932 / Pf-5), this protein is Probable RNA 2'-phosphotransferase.